A 281-amino-acid chain; its full sequence is Urease accessory protein UreD 2 (281 aa).

This sequence belongs to the UreD family. As to quaternary structure, ureD, UreF and UreG form a complex that acts as a GTP-hydrolysis-dependent molecular chaperone, activating the urease apoprotein by helping to assemble the nickel containing metallocenter of UreC. The UreE protein probably delivers the nickel.

It localises to the cytoplasm. Its function is as follows. Required for maturation of urease via the functional incorporation of the urease nickel metallocenter. The chain is Urease accessory protein UreD 2 from Pseudomonas syringae pv. tomato (strain ATCC BAA-871 / DC3000).